We begin with the raw amino-acid sequence, 99 residues long: Integration host factor subunit alpha (99 aa).

This sequence belongs to the bacterial histone-like protein family. As to quaternary structure, heterodimer of an alpha and a beta chain.

Its function is as follows. This protein is one of the two subunits of integration host factor, a specific DNA-binding protein that functions in genetic recombination as well as in transcriptional and translational control. This Anaeromyxobacter sp. (strain Fw109-5) protein is Integration host factor subunit alpha.